The following is a 114-amino-acid chain: Integration host factor subunit alpha (114 aa).

The protein belongs to the bacterial histone-like protein family. As to quaternary structure, heterodimer of an alpha and a beta chain.

This protein is one of the two subunits of integration host factor, a specific DNA-binding protein that functions in genetic recombination as well as in transcriptional and translational control. In Afipia carboxidovorans (strain ATCC 49405 / DSM 1227 / KCTC 32145 / OM5) (Oligotropha carboxidovorans), this protein is Integration host factor subunit alpha.